Consider the following 275-residue polypeptide: Lectin (275 aa).

The first 30 residues, 1–30 (MASLQTQMISFYLIFLSILLTTIFFFKVNS), serve as a signal peptide directing secretion. Asp111 and Gly129 together coordinate D-glucose. The Mn(2+) site is built by Glu149 and Asp151. Positions 151, 153, 155, and 159 each coordinate Ca(2+). Asp159 and His166 together coordinate Mn(2+). A propeptide spanning residues 211 to 217 (NSLEEEN) is cleaved from the precursor. D-glucose-binding residues include Gly246 and Ala247. Residues 270-275 (KQAADA) constitute a propeptide that is removed on maturation.

This sequence belongs to the leguminous lectin family. Heterotetramer of two alpha and two beta chains. Post-translationally, the mature form consists of two chains, alpha and beta, produced by cleavage of the immature protein. These remain cleaved, yet fold together to form one subunit.

Functionally, D-mannose specific lectin. The polypeptide is Lectin (Lens culinaris subsp. culinaris (Cultivated lentil)).